A 213-amino-acid chain; its full sequence is MEVLRRSSVFAAEVMEVFDRSPTDKELVSQAKALCRDYINSRLIRAGVSWSKPEHNTPVPGGKLAEVSAILLRLGDELEYIRPNVYRNIARQLNISLHSETVVTDAFLAVAAQIFTAGITWGKVVSLYAVAAGLAVDCVRHAQPAMVHTIVDCLGEFVRKTLVTWLKRRGGWADITKCVVSTDPSLRSHWLVAAVCSFGHFLKAIFFVLLPER.

The BH4 motif lies at 32–44 (KALCRDYINSRLI). The short motif at 67–83 (VSAILLRLGDELEYIRP) is the BH3 element. The short motif at 113 to 132 (QIFTAGITWGKVVSLYAVAA) is the BH1 element. Positions 165–179 (WLKRRGGWADITKCV) match the BH2 motif. A helical membrane pass occupies residues 190-210 (WLVAAVCSFGHFLKAIFFVLL).

It belongs to the Bcl-2 family.

The protein localises to the membrane. May play a role in apoptosis. In Gallus gallus (Chicken), this protein is Bcl-2-related ovarian killer protein.